A 331-amino-acid chain; its full sequence is 4-hydroxy-3-methylbut-2-enyl diphosphate reductase (331 aa).

C12 contributes to the [4Fe-4S] cluster binding site. H43 and H81 together coordinate (2E)-4-hydroxy-3-methylbut-2-enyl diphosphate. Dimethylallyl diphosphate-binding residues include H43 and H81. Residues H43 and H81 each contribute to the isopentenyl diphosphate site. C103 contributes to the [4Fe-4S] cluster binding site. (2E)-4-hydroxy-3-methylbut-2-enyl diphosphate is bound at residue H131. Position 131 (H131) interacts with dimethylallyl diphosphate. Position 131 (H131) interacts with isopentenyl diphosphate. Catalysis depends on E133, which acts as the Proton donor. Residue T170 coordinates (2E)-4-hydroxy-3-methylbut-2-enyl diphosphate. C198 contacts [4Fe-4S] cluster. Residues S226, N228, and S271 each coordinate (2E)-4-hydroxy-3-methylbut-2-enyl diphosphate. Dimethylallyl diphosphate contacts are provided by S226, N228, and S271. S226, N228, and S271 together coordinate isopentenyl diphosphate.

This sequence belongs to the IspH family. [4Fe-4S] cluster serves as cofactor.

The catalysed reaction is isopentenyl diphosphate + 2 oxidized [2Fe-2S]-[ferredoxin] + H2O = (2E)-4-hydroxy-3-methylbut-2-enyl diphosphate + 2 reduced [2Fe-2S]-[ferredoxin] + 2 H(+). It carries out the reaction dimethylallyl diphosphate + 2 oxidized [2Fe-2S]-[ferredoxin] + H2O = (2E)-4-hydroxy-3-methylbut-2-enyl diphosphate + 2 reduced [2Fe-2S]-[ferredoxin] + 2 H(+). The protein operates within isoprenoid biosynthesis; dimethylallyl diphosphate biosynthesis; dimethylallyl diphosphate from (2E)-4-hydroxy-3-methylbutenyl diphosphate: step 1/1. Its pathway is isoprenoid biosynthesis; isopentenyl diphosphate biosynthesis via DXP pathway; isopentenyl diphosphate from 1-deoxy-D-xylulose 5-phosphate: step 6/6. Its function is as follows. Catalyzes the conversion of 1-hydroxy-2-methyl-2-(E)-butenyl 4-diphosphate (HMBPP) into a mixture of isopentenyl diphosphate (IPP) and dimethylallyl diphosphate (DMAPP). Acts in the terminal step of the DOXP/MEP pathway for isoprenoid precursor biosynthesis. This chain is 4-hydroxy-3-methylbut-2-enyl diphosphate reductase, found in Listeria monocytogenes serotype 4b (strain CLIP80459).